The chain runs to 325 residues: Aldo-keto reductase family 1 member A1 (325 aa).

A2 is modified (N-acetylalanine). S4 bears the Phosphoserine mark. NADP(+) contacts are provided by residues 11–20 (GQKMPLIGLG), T21, W22, and D45. Y50 functions as the Proton donor in the catalytic mechanism. The residue at position 127 (K127) is an N6-acetyllysine; alternate. At K127 the chain carries N6-succinyllysine; alternate. At K145 the chain carries N6-succinyllysine. NADP(+) contacts are provided by S162, N163, S211, L213, S215, S216, K263, S264, V265, T266, R269, Q272, and N273. Position 211 is a phosphoserine (S211).

It belongs to the aldo/keto reductase family. Monomer.

The protein resides in the cytoplasm. The protein localises to the cytosol. Its subcellular location is the apical cell membrane. The enzyme catalyses a primary alcohol + NADP(+) = an aldehyde + NADPH + H(+). It catalyses the reaction glycerol + NADP(+) = D-glyceraldehyde + NADPH + H(+). It carries out the reaction glycerol + NADP(+) = L-glyceraldehyde + NADPH + H(+). The catalysed reaction is L-gulonate + NADP(+) = aldehydo-D-glucuronate + NADPH + H(+). The enzyme catalyses L-gulono-1,4-lactone + NADP(+) = D-glucurono-3,6-lactone + NADPH + H(+). It catalyses the reaction allyl alcohol + NADP(+) = acrolein + NADPH + H(+). It carries out the reaction hydroxyacetone + NADP(+) = methylglyoxal + NADPH + H(+). The catalysed reaction is 3-deoxyfructose + NADP(+) = 3-deoxyglucosone + NADPH + H(+). The enzyme catalyses (R)-mevalonate + NADP(+) = (R)-mevaldate + NADPH + H(+). It catalyses the reaction pyridine 3-methanol + NADP(+) = pyridine-3-carbaldehyde + NADPH + H(+). It carries out the reaction S-nitroso-CoA + NADPH + H(+) = sulfinamide-CoA + NADP(+). The catalysed reaction is S-nitrosoglutathione + NADPH + H(+) = S-(hydroxysulfenamide)glutathione + NADP(+). Catalyzes the NADPH-dependent reduction of a wide variety of carbonyl-containing compounds to their corresponding alcohols. Displays enzymatic activity towards endogenous metabolites such as aromatic and aliphatic aldehydes, ketones, monosaccharides and bile acids, with a preference for negatively charged substrates, such as glucuronate and succinic semialdehyde. Plays an important role in ascorbic acid biosynthesis by catalyzing the reduction of D-glucuronic acid and D-glucurono-gamma-lactone. Functions as a detoxifiying enzyme by reducing a range of toxic aldehydes. Reduces methylglyoxal and 3-deoxyglucosone, which are present at elevated levels under hyperglycemic conditions and are cytotoxic. Involved also in the detoxification of lipid-derived aldehydes like acrolein. Plays a role in the activation of procarcinogens, such as polycyclic aromatic hydrocarbon trans-dihydrodiols, and in the metabolism of various xenobiotics and drugs. Also acts as an inhibitor of protein S-nitrosylation by mediating degradation of S-nitroso-coenzyme A (S-nitroso-CoA), a cofactor required to S-nitrosylate proteins. S-nitroso-CoA reductase activity is involved in reprogramming intermediary metabolism in renal proximal tubules, notably by inhibiting protein S-nitrosylation of isoform 2 of PKM (PKM2). Also acts as a S-nitroso-glutathione reductase by catalyzing the NADPH-dependent reduction of S-nitrosoglutathione. Displays no reductase activity towards retinoids. The sequence is that of Aldo-keto reductase family 1 member A1 (AKR1A1) from Sus scrofa (Pig).